Reading from the N-terminus, the 401-residue chain is Chromate transport protein (401 aa).

Helical transmembrane passes span 26-46 (LVMY…ALAG), 67-87 (GLAL…IYLG), 93-113 (IVGA…MVLA), 124-144 (LTWM…IIAI), 172-192 (VITE…VWFW), 214-234 (AASG…GVFF), 237-257 (AGAF…GGVV), 272-294 (VAVA…YLVA), 299-321 (ACVA…APYF), 330-350 (ILAF…GAVI), 356-376 (SIVD…LLKF), and 379-399 (LSEP…YPLL).

This sequence belongs to the chromate ion transporter (CHR) (TC 2.A.51) family.

Its subcellular location is the cell inner membrane. Functionally, this protein reduces chromate accumulation and is essential for chromate resistance. In Cupriavidus metallidurans (strain ATCC 43123 / DSM 2839 / NBRC 102507 / CH34) (Ralstonia metallidurans), this protein is Chromate transport protein.